The sequence spans 248 residues: E3 SUMO-protein ligase NSE2 (248 aa).

M1 carries the post-translational modification N-acetylmethionine. Residues K92 and K109 each participate in a glycyl lysine isopeptide (Lys-Gly) (interchain with G-Cter in SUMO2) cross-link. The residue at position 118 (S118) is a Phosphoserine. Glycyl lysine isopeptide (Lys-Gly) (interchain with G-Cter in SUMO2) cross-links involve residues K127 and K132. Residues 156–242 (VDEDMIVTQS…LRRAIESHKK (87 aa)) form an SP-RING-type zinc finger. Zn(2+) is bound by residues C187, H189, C212, and C217.

This sequence belongs to the NSE2 family. As to quaternary structure, component of the SMC5-SMC6 complex which consists at least of SMC5, SMC6, NSMCE2, NSMCE1, NSMCE4A or EID3 and NSMCE3. Post-translationally, sumoylated, possibly via autosumoylation.

It localises to the nucleus. The protein resides in the chromosome. The protein localises to the telomere. Its subcellular location is the PML body. It functions in the pathway protein modification; protein sumoylation. Functionally, E3 SUMO-protein ligase component of the SMC5-SMC6 complex, a complex involved in DNA double-strand break repair by homologous recombination. Is not be required for the stability of the complex. The complex may promote sister chromatid homologous recombination by recruiting the SMC1-SMC3 cohesin complex to double-strand breaks. Acts as an E3 ligase mediating SUMO attachment to various proteins such as SMC6L1 and TSNAX, the shelterin complex subunits TERF1, TERF2, TINF2 and TERF2IP, RAD51AP1, and maybe the cohesin components RAD21 and STAG2. Required for recruitment of telomeres to PML nuclear bodies. Required for sister chromatid cohesion during prometaphase and mitotic progression. The chain is E3 SUMO-protein ligase NSE2 (NSMCE2) from Bos taurus (Bovine).